A 448-amino-acid chain; its full sequence is Exodeoxyribonuclease 7 large subunit (448 aa).

This sequence belongs to the XseA family. Heterooligomer composed of large and small subunits.

The protein resides in the cytoplasm. The enzyme catalyses Exonucleolytic cleavage in either 5'- to 3'- or 3'- to 5'-direction to yield nucleoside 5'-phosphates.. In terms of biological role, bidirectionally degrades single-stranded DNA into large acid-insoluble oligonucleotides, which are then degraded further into small acid-soluble oligonucleotides. The polypeptide is Exodeoxyribonuclease 7 large subunit (Shewanella baltica (strain OS195)).